Reading from the N-terminus, the 221-residue chain is LHFPL tetraspan subfamily member 5 protein (221 aa).

At 1–24 (MPKLLPAQEAARIYHTNYVRNARA) the chain is on the cytoplasmic side. The helical transmembrane segment at 25-45 (MGVLWALFTLCFSILMVVTFI) threads the bilayer. Over 46–98 (QPYWIGDSIDTPQAGYFGLFSYCIGNALTGELICKGSPLDFGTIPSSAFKTAM) the chain is Extracellular. A helical membrane pass occupies residues 99 to 119 (FFVGISTFLIIGSILCFSLFF). Residues 120 to 128 (FCNAATVYK) are Cytoplasmic-facing. The helical transmembrane segment at 129-149 (VCAWMQLAAATGLMIGCLIYP) threads the bilayer. Over 150-179 (DGWDSSEVKRMCGDKTDKYTLGACTVRWAY) the chain is Extracellular. A helical transmembrane segment spans residues 180 to 200 (ILCIIGILDALILSFLAFVLG). Topologically, residues 201-221 (NRQDNLLPSDFKVESKEEGNE) are cytoplasmic.

This sequence belongs to the LHFP family.

It is found in the cell membrane. Functionally, probable component of the mechanotransducer (MET) non-specific cation channel complex. This is LHFPL tetraspan subfamily member 5 protein from Gallus gallus (Chicken).